An 89-amino-acid polypeptide reads, in one-letter code: Cytochrome c oxidase subunit 7A, mitochondrial (89 aa).

The N-terminal 31 residues, 1–31 (MMNLSRAVVRSFATTAGRRSAAVPKDQIEKG), are a transit peptide targeting the mitochondrion. At 32 to 58 (YFEIRKVQEHFQKKDGKPVFLKGSVVD) the chain is on the mitochondrial matrix side. Residues 59-81 (NVLYRVTVALALVGIGGMGKLFY) traverse the membrane as a helical segment. Residues 82 to 89 (ELSVPKKE) lie on the Mitochondrial intermembrane side of the membrane.

It belongs to the cytochrome c oxidase VIIa family. As to quaternary structure, component of the cytochrome c oxidase (complex IV, CIV), a multisubunit enzyme composed of a catalytic core of 3 subunits and several supernumerary subunits. The complex exists as a monomer or a dimer and forms supercomplexes (SCs) in the inner mitochondrial membrane with ubiquinol-cytochrome c oxidoreductase (cytochrome b-c1 complex, complex III, CIII).

The protein localises to the mitochondrion inner membrane. The protein operates within energy metabolism; oxidative phosphorylation. Functionally, component of the cytochrome c oxidase, the last enzyme in the mitochondrial electron transport chain which drives oxidative phosphorylation. The respiratory chain contains 3 multisubunit complexes succinate dehydrogenase (complex II, CII), ubiquinol-cytochrome c oxidoreductase (cytochrome b-c1 complex, complex III, CIII) and cytochrome c oxidase (complex IV, CIV), that cooperate to transfer electrons derived from NADH and succinate to molecular oxygen, creating an electrochemical gradient over the inner membrane that drives transmembrane transport and the ATP synthase. Cytochrome c oxidase is the component of the respiratory chain that catalyzes the reduction of oxygen to water. Electrons originating from reduced cytochrome c in the intermembrane space (IMS) are transferred via the dinuclear copper A center (CU(A)) of subunit 2 and heme A of subunit 1 to the active site in subunit 1, a binuclear center (BNC) formed by heme A3 and copper B (CU(B)). The BNC reduces molecular oxygen to 2 water molecules using 4 electrons from cytochrome c in the IMS and 4 protons from the mitochondrial matrix. This Drosophila melanogaster (Fruit fly) protein is Cytochrome c oxidase subunit 7A, mitochondrial.